Reading from the N-terminus, the 627-residue chain is Probable inactive L-type lectin-domain containing receptor kinase III.1 (627 aa).

A signal peptide spans 1-23; it reads MITFKSIALTIIFLSYFVSCVSS. At 24 to 303 the chain is on the extracellular side; the sequence is QRETKFLNHG…STEKKSNNTM (280 aa). Residues 26–262 are legume-lectin like; the sequence is ETKFLNHGFL…SHFVLGWSFN (237 aa). Asn-57, Asn-78, Asn-127, Asn-184, Asn-202, Asn-209, and Asn-230 each carry an N-linked (GlcNAc...) asparagine glycan. Residues 272–297 form a disordered region; it reads ITKLPSLPDPPPTLSPSPSPPVSTEK. Pro residues predominate over residues 278–292; sequence LPDPPPTLSPSPSPP. Asn-300 carries N-linked (GlcNAc...) asparagine glycosylation. The helical transmembrane segment at 304–324 threads the bilayer; the sequence is LIIIVAASATVALMILIFSGF. Topologically, residues 325-627 are cytoplasmic; sequence WFLRRDKIFF…PHDDYLFYGV (303 aa). The Protein kinase domain occupies 353-623; that stretch reads FDNSKLLGER…TEALPHDDYL (271 aa). ATP is bound by residues 359-367 and Lys-381; that span reads LGERNSGSF.

It in the C-terminal section; belongs to the protein kinase superfamily. Ser/Thr protein kinase family. This sequence in the N-terminal section; belongs to the leguminous lectin family.

The protein localises to the cell membrane. This is Probable inactive L-type lectin-domain containing receptor kinase III.1 (LECRK31) from Arabidopsis thaliana (Mouse-ear cress).